The primary structure comprises 323 residues: Sphingolipid delta(4)-desaturase DES1 (323 aa).

The N-myristoyl glycine moiety is linked to residue Gly-2. 2 helical membrane passes run 41–61 and 68–88; these read PNLIWIVTSMLLVQLASFYLV and WLMFWSYAFGSCLNHSMTLAI. The Histidine box-1 motif lies at 89–93; it reads HEISH. Residues 104 to 124 form a helical membrane-spanning segment; sequence WNRWFGMFANLSLGVPYSISF. A Histidine box-2 motif is present at residues 128-132; the sequence is HMDHH. Transmembrane regions (helical) follow at residues 152–172, 184–204, and 210–230; these read FFCTTLRKLVWVILQPLFYAF, HLEVINTVIQVTFDVLVYYVF, and VYMLAASLLGLGLHPISGHFI. A Histidine box-3 motif is present at residues 259–263; the sequence is HNEHH. The residue at position 307 (Ser-307) is a Phosphoserine.

Belongs to the fatty acid desaturase type 1 family. DEGS subfamily. As to quaternary structure, interacts with RLBP1; the interaction increases synthesis of chromophore-precursors by DEGS1. Post-translationally, myristoylation can target the enzyme to the mitochondria leading to an increase in ceramide levels.

Its subcellular location is the mitochondrion membrane. The protein localises to the endoplasmic reticulum membrane. It catalyses the reaction an N-acylsphinganine + 2 Fe(II)-[cytochrome b5] + O2 + 2 H(+) = an N-acylsphing-4-enine + 2 Fe(III)-[cytochrome b5] + 2 H2O. The enzyme catalyses all-trans-retinol = 11-cis-retinol. The catalysed reaction is all-trans-retinol = 9-cis-retinol. It carries out the reaction all-trans-retinol = 13-cis-retinol. It catalyses the reaction 11-cis-retinol = 13-cis-retinol. The enzyme catalyses 11-cis-retinol = 9-cis-retinol. Functionally, has sphingolipid-delta-4-desaturase activity. Converts D-erythro-sphinganine to D-erythro-sphingosine (E-sphing-4-enine). Catalyzes the equilibrium isomerization of retinols. This Rattus norvegicus (Rat) protein is Sphingolipid delta(4)-desaturase DES1.